Consider the following 2469-residue polypeptide: Large tegument protein deneddylase (2469 aa).

Residues 1–237 are deubiquitination activity; sequence MDIHPLFKKL…LHGPNIDLTS (237 aa). A Peptidase C76 domain is found at 13-225; the sequence is EGIASTHQAD…IMNHYRVINY (213 aa). Catalysis depends on residues Cys-33, Asp-163, and His-165. 2 disordered regions span residues 244–318 and 346–377; these read EISP…ALTP and HPVE…DDDN. Positions 260–271 are enriched in pro residues; that stretch reads PKTPRTPKPATP. A region of interest (interaction with inner tegument protein) is located at residue Ser-286. Basic residues predominate over residues 295–309; the sequence is KPPKIPKTSKKSKKV. The span at 352–365 shows a compositional bias: polar residues; sequence TPGTDSLLSGINST.

The protein belongs to the herpesviridae large tegument protein family. In terms of assembly, interacts with host CUL1 and CUL4A; these interactions inhibit the E3 ligase activity of cullins. Interacts with inner tegument protein. Interacts with capsid vertex specific component CVC2. Interacts with the major capsid protein/MCP.

It localises to the virion tegument. Its subcellular location is the host cytoplasm. The protein localises to the host nucleus. It catalyses the reaction Thiol-dependent hydrolysis of ester, thioester, amide, peptide and isopeptide bonds formed by the C-terminal Gly of ubiquitin (a 76-residue protein attached to proteins as an intracellular targeting signal).. Functionally, large tegument protein that plays multiple roles in the viral cycle. During viral entry, remains associated with the capsid while most of the tegument is detached and participates in the capsid transport toward the host nucleus. Plays a role in the routing of the capsid at the nuclear pore complex and subsequent uncoating. Within the host nucleus, acts as a deneddylase and promotes the degradation of nuclear CRLs (cullin-RING ubiquitin ligases) and thereby stabilizes nuclear CRL substrates, while cytoplasmic CRLs remain unaffected. These modifications prevent host cell cycle S-phase progression and create a favorable environment allowing efficient viral genome replication. Participates later in the secondary envelopment of capsids. Indeed, plays a linker role for the association of the outer viral tegument to the capsids together with the inner tegument protein. This Saimiriine herpesvirus 2 (strain 11) (SaHV-2) protein is Large tegument protein deneddylase (64).